A 695-amino-acid polypeptide reads, in one-letter code: MAKDFLLEVGIEEMPARFLGPALTQLKEQTVKTLQELRIEYADIQTYGTPRRLVLYIKDLAENQAALEKEVKGPAKKAAFDAAGNPTKAILGFTRSQGVSMEDLVVRSIGQVEYLYALKREEGRPTAQVLAEICPGLIAGLHFPKPMRWGELELRFARPIRWLLALFGEAVVPFELANLQSNRFTYGHRFLSTGDLSIANPEDYFTKIRGAYVLIDPAERKELIWQQVQELATAEGGVVEKDEDLLDEITNILEWPTALCGTFDEDYLKLPGAVLVTPMREHQRYFPVVSNEGKLLNKFIAVRNGTRAYIEIVTAGNEKVLRARLADAAFFFEEDLKQPLASKVNGLQKVVFLEGLGSIADKVDRIGAMADHLAETLGANEEQRENIQRGALLAKADLITNMVYEFPELQGEMGREYALRNGEAPEVAEAIFEHYLPRFAGDLLPETLAGSVLSVADKMDSIVGCFAIGIQPTGSQDPYALRRQALGICHMLIEGNIHLSLRELVQWAYQGYHEGVELKQDLNQVITEIEEFFKQRLKGILNDRGLSYDTVDAVLTAGFDDIADVVDRGMALAAFRELPAFAALMTAFNRANNLAKHATTTQVQEVHLEHSAEQELYGLLTKLEGEVRPLLEQKNYALALQKIATIQSPLDTFFESVMVMVEDEAVKTNRLALLKKLVGLSMNVADFSKIVVETK.

Belongs to the class-II aminoacyl-tRNA synthetase family. As to quaternary structure, tetramer of two alpha and two beta subunits.

Its subcellular location is the cytoplasm. It carries out the reaction tRNA(Gly) + glycine + ATP = glycyl-tRNA(Gly) + AMP + diphosphate. The sequence is that of Glycine--tRNA ligase beta subunit from Desulforamulus reducens (strain ATCC BAA-1160 / DSM 100696 / MI-1) (Desulfotomaculum reducens).